The primary structure comprises 289 residues: Ribosomal RNA small subunit methyltransferase A (289 aa).

S-adenosyl-L-methionine is bound by residues Asn33, Val35, Gly60, Glu81, Asp111, and Asn130.

This sequence belongs to the class I-like SAM-binding methyltransferase superfamily. rRNA adenine N(6)-methyltransferase family. RsmA subfamily.

It localises to the cytoplasm. It catalyses the reaction adenosine(1518)/adenosine(1519) in 16S rRNA + 4 S-adenosyl-L-methionine = N(6)-dimethyladenosine(1518)/N(6)-dimethyladenosine(1519) in 16S rRNA + 4 S-adenosyl-L-homocysteine + 4 H(+). Specifically dimethylates two adjacent adenosines (A1518 and A1519) in the loop of a conserved hairpin near the 3'-end of 16S rRNA in the 30S particle. May play a critical role in biogenesis of 30S subunits. This chain is Ribosomal RNA small subunit methyltransferase A, found in Corynebacterium efficiens (strain DSM 44549 / YS-314 / AJ 12310 / JCM 11189 / NBRC 100395).